The primary structure comprises 470 residues: Uronate isomerase (470 aa).

It belongs to the metallo-dependent hydrolases superfamily. Uronate isomerase family.

The enzyme catalyses D-glucuronate = D-fructuronate. It carries out the reaction aldehydo-D-galacturonate = keto-D-tagaturonate. The protein operates within carbohydrate metabolism; pentose and glucuronate interconversion. The chain is Uronate isomerase from Shigella boydii serotype 4 (strain Sb227).